A 45-amino-acid polypeptide reads, in one-letter code: Large ribosomal subunit protein bL34 (45 aa).

Belongs to the bacterial ribosomal protein bL34 family.

The polypeptide is Large ribosomal subunit protein bL34 (Frankia casuarinae (strain DSM 45818 / CECT 9043 / HFP020203 / CcI3)).